Reading from the N-terminus, the 712-residue chain is Copper amine oxidase 1 (712 aa).

A319–L330 contacts substrate. The Proton acceptor role is filled by D321. The cysteines at positions 340 and 366 are disulfide-linked. Residue A404–Y409 coordinates substrate. The active-site Schiff-base intermediate with substrate; via topaquinone is the Y407. Y407 is modified (2',4',5'-topaquinone). Residues H458 and H460 each coordinate Cu cation. The Mn(2+) site is built by D616 and I617. H627 is a binding site for Cu cation.

The protein belongs to the copper/topaquinone oxidase family. In terms of assembly, homodimer. Cu cation is required as a cofactor. Zn(2+) serves as cofactor. The cofactor is L-topaquinone. Requires Mn(2+) as cofactor. Post-translationally, topaquinone (TPQ) is generated by copper-dependent autoxidation of a specific tyrosyl residue.

It is found in the cytoplasm. The catalysed reaction is a primary methyl amine + O2 + H2O = an aldehyde + H2O2 + NH4(+). Functionally, copper amine oxidase involved in the metabolism of xenobiotic and biogenic amines. Capable of catalyzing the oxidative deamination of primary amines such as ethylamine as alternate sources of nitrogen to support growth. The protein is Copper amine oxidase 1 (cao1) of Schizosaccharomyces pombe (strain 972 / ATCC 24843) (Fission yeast).